The sequence spans 365 residues: Peptidyl-prolyl cis-trans isomerase FKBP42 (365 aa).

The segment covering Met1–Glu15 has biased composition (basic and acidic residues). The segment at Met1–Ala44 is disordered. The tract at residues Met1–Glu163 is interaction with MDR1/PGP1. Positions Tyr67–Asp159 constitute a PPIase FKBP-type domain. Residues Glu163–Lys337 are interaction with MRP1. 3 TPR repeats span residues Ala179–Asp212, Asn230–Asn263, and Pro264–Asp297. The tract at residues Gln310 to Phe326 is calmodulin-binding. Residues Ser338–Phe357 traverse the membrane as a helical; Anchor for type IV membrane protein segment.

Belongs to the FKBP-type PPIase family. Interacts with calmodulin (CaM), MRP1, MRP2, MDR1/PGP1, MDR11/PGP19 and SHD/HSP90. Interacts with 1-naphthylphthalamic acid (NPA).

The protein localises to the cell membrane. It localises to the vacuole membrane. The protein resides in the endoplasmic reticulum. The catalysed reaction is [protein]-peptidylproline (omega=180) = [protein]-peptidylproline (omega=0). In terms of biological role, PPIases accelerate the folding of proteins. It catalyzes the cis-trans isomerization of proline imidic peptide bonds in oligopeptides. Modulates the uptake of MRP substrates into the vacuole; reduces metolachlor-GS (MOC-GS) and enhances 17-beta-estradiol 17-(beta-D-glucuronide) (E(2)17betaG) uptake. Regulates cell elongation and orientation. Functions as a positive regulator of PGP1-mediated auxin transport. Confers drug modulation of PGP1 efflux activity as interaction with NPA or flavonol quercetin prevents its physical and functional interaction with PGP1. Required for the proper localization of auxin-related ABCB transporters. Plays a role in brassinosteroid (BR) signaling pathway. Required for seed development by promoting stamen elongation and, to a lesser extent, anther dehiscence and pollen maturation, probably as a chaperone helping ABCB1 and ABCB19 auxin transporters localization and activation. Involved in auxin signaling in nectaries to promote starch accumulation to attract visiting pollinators. The chain is Peptidyl-prolyl cis-trans isomerase FKBP42 from Arabidopsis thaliana (Mouse-ear cress).